A 363-amino-acid polypeptide reads, in one-letter code: NAD(P)H-quinone oxidoreductase subunit 1, chloroplastic (363 aa).

The next 7 membrane-spanning stretches (helical) occupy residues 28-48 (WVLA…LVIV), 98-118 (FSIG…VIPF), 129-149 (IGIF…LMSG), 253-273 (FGLF…FVTV), 274-294 (LYLG…LVEI), 300-320 (IFGT…FLFI), and 336-356 (LLNL…LLTT).

It belongs to the complex I subunit 1 family. NDH is composed of at least 16 different subunits, 5 of which are encoded in the nucleus.

It is found in the plastid. Its subcellular location is the chloroplast thylakoid membrane. The enzyme catalyses a plastoquinone + NADH + (n+1) H(+)(in) = a plastoquinol + NAD(+) + n H(+)(out). It carries out the reaction a plastoquinone + NADPH + (n+1) H(+)(in) = a plastoquinol + NADP(+) + n H(+)(out). In terms of biological role, NDH shuttles electrons from NAD(P)H:plastoquinone, via FMN and iron-sulfur (Fe-S) centers, to quinones in the photosynthetic chain and possibly in a chloroplast respiratory chain. The immediate electron acceptor for the enzyme in this species is believed to be plastoquinone. Couples the redox reaction to proton translocation, and thus conserves the redox energy in a proton gradient. The sequence is that of NAD(P)H-quinone oxidoreductase subunit 1, chloroplastic from Citrus sinensis (Sweet orange).